The chain runs to 558 residues: Proline--tRNA ligase (558 aa).

Belongs to the class-II aminoacyl-tRNA synthetase family. ProS type 1 subfamily. In terms of assembly, homodimer.

The protein localises to the cytoplasm. The enzyme catalyses tRNA(Pro) + L-proline + ATP = L-prolyl-tRNA(Pro) + AMP + diphosphate. Its function is as follows. Catalyzes the attachment of proline to tRNA(Pro) in a two-step reaction: proline is first activated by ATP to form Pro-AMP and then transferred to the acceptor end of tRNA(Pro). As ProRS can inadvertently accommodate and process non-cognate amino acids such as alanine and cysteine, to avoid such errors it has two additional distinct editing activities against alanine. One activity is designated as 'pretransfer' editing and involves the tRNA(Pro)-independent hydrolysis of activated Ala-AMP. The other activity is designated 'posttransfer' editing and involves deacylation of mischarged Ala-tRNA(Pro). The misacylated Cys-tRNA(Pro) is not edited by ProRS. The protein is Proline--tRNA ligase of Coprothermobacter proteolyticus (strain ATCC 35245 / DSM 5265 / OCM 4 / BT).